A 511-amino-acid chain; its full sequence is Frizzled/smoothened-like sans CRD protein C (511 aa).

A signal peptide spans 1–25 (MNQINKFIKNLYLIIITIILIIVIS). Residues 26-93 (NDNNGLFING…QWESYFEMSL (68 aa)) lie on the Extracellular side of the membrane. N-linked (GlcNAc...) asparagine glycosylation is present at asparagine 51. Residues 94-114 (IMGSISMFASLFLIITYSPLI) traverse the membrane as a helical segment. Residues 115 to 122 (NKKHTRHT) lie on the Cytoplasmic side of the membrane. The helical transmembrane segment at 123–143 (VGILCMSIGIFFVMVSDGRQL) threads the bilayer. Topologically, residues 144–172 (WDIESPGEYKKYCPDTGRYARQSDTKCLT) are extracellular. Residues 173 to 193 (TGLFFQFGCVTAIGWWSILAV) traverse the membrane as a helical segment. Topologically, residues 194 to 209 (DLWMTIAKKVQTTKKQ) are cytoplasmic. Residues 210 to 230 (LLYYLIGINTVSLILTFGPVV) form a helical membrane-spanning segment. The Extracellular portion of the chain corresponds to 231 to 253 (KNQYGFGNAAIGCWMLDLKYQYG). A helical transmembrane segment spans residues 254–274 (FFWIPVGICLSVGSVFIGLIF). The Cytoplasmic segment spans residues 275 to 295 (WEIYKISDAVKKRYLKKHIKP). A helical transmembrane segment spans residues 296-316 (LCLIVLMCLEFLYMFIYYSYI). The Extracellular segment spans residues 317–357 (TANQPTYNKHVAEYIMCLIINAANVPGSYTCQLKTVSPTAQ). A helical transmembrane segment spans residues 358-378 (FLFLIAIRLMGLQGLIFYGLT). Over 379 to 511 (AATKKVWANS…RVNSPDNLQP (133 aa)) the chain is Cytoplasmic. Residues 430 to 511 (NGYTTGGSDN…RVNSPDNLQP (82 aa)) form a disordered region. A compositionally biased stretch (gly residues) spans 433 to 443 (TTGGSDNGVGS). Over residues 451–460 (KSSSNGGAQD) the composition is skewed to polar residues. The span at 461–485 (NNNNNNNNNNNNNNNNNNNNNNNNN) shows a compositional bias: low complexity. Positions 486–511 (SSSLEISGVESNNSTPRVNSPDNLQP) are enriched in polar residues.

This sequence belongs to the G-protein coupled receptor Fz/Smo family.

The protein localises to the membrane. The sequence is that of Frizzled/smoothened-like sans CRD protein C (fscC) from Dictyostelium discoideum (Social amoeba).